The following is a 414-amino-acid chain: tRNA methyltransferase 10 homolog C (414 aa).

A mitochondrion-targeting transit peptide spans 1-35; that stretch reads MNVTVRFLRPFARYLVPYTFHRTRSNSYSRVLQRY. S79 carries the post-translational modification Phosphoserine. Residues 133 to 162 are a coiled coil; that stretch reads GKEMMKKAKQMKKEMKAAAREEAKRARSLE. One can recognise an SAM-dependent MTase TRM10-type domain in the interval 186–378; that stretch reads LGWKGVQAMQ…KFVPRRKHTG (193 aa).

This sequence belongs to the class IV-like SAM-binding methyltransferase superfamily. TRM10 family. In terms of assembly, component of mitochondrial ribonuclease P, a complex composed of TRMT10C/MRPP1, HSD17B10/MRPP2 and PRORP/MRPP3. Interacts with HSD17B10/MRPP2; forming the MRPP1-MRPP2 subcomplex of the mitochondrial ribonuclease P complex. Interacts with GRSF1.

It is found in the mitochondrion matrix. The protein localises to the mitochondrion nucleoid. It carries out the reaction adenosine(9) in tRNA + S-adenosyl-L-methionine = N(1)-methyladenosine(9) in tRNA + S-adenosyl-L-homocysteine + H(+). The enzyme catalyses guanosine(9) in tRNA + S-adenosyl-L-methionine = N(1)-methylguanosine(9) in tRNA + S-adenosyl-L-homocysteine + H(+). It catalyses the reaction an adenosine in mRNA + S-adenosyl-L-methionine = an N(1)-methyladenosine in mRNA + S-adenosyl-L-homocysteine + H(+). Functionally, mitochondrial tRNA N(1)-methyltransferase involved in mitochondrial tRNA maturation. Component of mitochondrial ribonuclease P, a complex composed of TRMT10C/MRPP1, HSD17B10/MRPP2 and PRORP/MRPP3, which cleaves tRNA molecules in their 5'-ends. Together with HSD17B10/MRPP2, forms a subcomplex of the mitochondrial ribonuclease P, named MRPP1-MRPP2 subcomplex, which displays functions that are independent of the ribonuclease P activity. The MRPP1-MRPP2 subcomplex catalyzes the formation of N(1)-methylguanine and N(1)-methyladenine at position 9 (m1G9 and m1A9, respectively) in tRNAs; TRMT10C/MRPP1 acting as the catalytic N(1)-methyltransferase subunit. The MRPP1-MRPP2 subcomplex also acts as a tRNA maturation platform: following 5'-end cleavage by the mitochondrial ribonuclease P complex, the MRPP1-MRPP2 subcomplex enhances the efficiency of 3'-processing catalyzed by ELAC2, retains the tRNA product after ELAC2 processing and presents the nascent tRNA to the mitochondrial CCA tRNA nucleotidyltransferase TRNT1 enzyme. In addition to tRNA N(1)-methyltransferase activity, TRMT10C/MRPP1 also acts as a mRNA N(1)-methyltransferase by mediating methylation of adenosine residues at the N(1) position of MT-ND5 mRNA. Associates with mitochondrial DNA complexes at the nucleoids to initiate RNA processing and ribosome assembly. The polypeptide is tRNA methyltransferase 10 homolog C (Rattus norvegicus (Rat)).